The following is a 292-amino-acid chain: Inhibitory synaptic factor 1 (292 aa).

Disordered regions lie at residues methionine 1–isoleucine 25, serine 122–arginine 186, and cysteine 198–asparagine 292. A coiled-coil region spans residues glutamate 23–aspartate 63. The segment covering cysteine 198–glycine 214 has biased composition (acidic residues). Residues arginine 263 to arginine 285 show a composition bias toward polar residues.

This sequence belongs to the INSYN1 family. Interacts with GPHN.

The protein resides in the postsynaptic density. Component of the protein machinery at the inhibitory synapses, probably acting as a scaffold. Inhibitory synapses dampen neuronal activity through postsynaptic hyperpolarization. This synaptic inhibition is fundamental for the functioning of the central nervous system, shaping and orchestrating the flow of information through neuronal networks to generate a precise neural code. The sequence is that of Inhibitory synaptic factor 1 from Bos taurus (Bovine).